A 234-amino-acid chain; its full sequence is LexA repressor (234 aa).

The H-T-H motif DNA-binding region spans 41–61 (RAEIAAELGFRSPNAAEEHLK). Active-site for autocatalytic cleavage activity residues include S152 and K189.

The protein belongs to the peptidase S24 family. Homodimer.

The enzyme catalyses Hydrolysis of Ala-|-Gly bond in repressor LexA.. Represses a number of genes involved in the response to DNA damage (SOS response), including recA and lexA. In the presence of single-stranded DNA, RecA interacts with LexA causing an autocatalytic cleavage which disrupts the DNA-binding part of LexA, leading to derepression of the SOS regulon and eventually DNA repair. This is LexA repressor from Polaromonas naphthalenivorans (strain CJ2).